The sequence spans 617 residues: Chaperone protein HscA homolog (617 aa).

It belongs to the heat shock protein 70 family.

Its function is as follows. Chaperone involved in the maturation of iron-sulfur cluster-containing proteins. Has a low intrinsic ATPase activity which is markedly stimulated by HscB. The protein is Chaperone protein HscA homolog of Photobacterium profundum (strain SS9).